Here is a 156-residue protein sequence, read N- to C-terminus: Aspartate carbamoyltransferase regulatory chain (156 aa).

4 residues coordinate Zn(2+): cysteine 109, cysteine 114, cysteine 140, and cysteine 143.

Belongs to the PyrI family. In terms of assembly, contains catalytic and regulatory chains. Zn(2+) is required as a cofactor.

Its function is as follows. Involved in allosteric regulation of aspartate carbamoyltransferase. This Methanosarcina acetivorans (strain ATCC 35395 / DSM 2834 / JCM 12185 / C2A) protein is Aspartate carbamoyltransferase regulatory chain.